Consider the following 510-residue polypeptide: Lysine--tRNA ligase (510 aa).

Mg(2+) contacts are provided by E420 and E427.

It belongs to the class-II aminoacyl-tRNA synthetase family. In terms of assembly, homodimer. The cofactor is Mg(2+).

It localises to the cytoplasm. The enzyme catalyses tRNA(Lys) + L-lysine + ATP = L-lysyl-tRNA(Lys) + AMP + diphosphate. The chain is Lysine--tRNA ligase from Vibrio vulnificus (strain CMCP6).